Consider the following 334-residue polypeptide: N,N'-diacetyllegionaminic acid synthase (334 aa).

The AFP-like domain maps to 282–334 (SLVAKKDIKKGEIFSEGNLTTKRPANGISAMRYEEFLGKIATKNYKEDELIRE).

It carries out the reaction 2,4-diacetamido-2,4,6-trideoxy-alpha-D-mannopyranose + phosphoenolpyruvate + H2O = N,N-diacetyllegionaminate + phosphate. In terms of biological role, involved in biosynthesis of legionaminic acid (5,7-diamino-3,5,7,9-tetradeoxy-D-glycero-D-galacto-non-2-ulosonic acid)(Leg), a sialic acid-like derivative that is incorporated into flagellin via O-linkage to Ser/Thr. Catalyzes the condensation of 2,4-diacetamido-2,4,6-trideoxymannose with phosphoenolpyruvate (PEP) to give N,N'-diacetyllegionaminic acid. The polypeptide is N,N'-diacetyllegionaminic acid synthase (legI) (Campylobacter jejuni subsp. jejuni serotype O:2 (strain ATCC 700819 / NCTC 11168)).